The primary structure comprises 504 residues: Porphyrin biosynthesis protein HemD (504 aa).

Residues 1-248 are uroporphyrinogen-III C-methyltransferase; it reads MEHGFVALVG…LSEKFSWFMK (248 aa). The tract at residues 249–504 is uroporphyrinogen-III synthase; that stretch reads KPLFGTKILV…LEIGGGNIYD (256 aa).

It in the N-terminal section; belongs to the precorrin methyltransferase family. The protein in the C-terminal section; belongs to the uroporphyrinogen-III synthase family.

It catalyses the reaction uroporphyrinogen III + 2 S-adenosyl-L-methionine = precorrin-2 + 2 S-adenosyl-L-homocysteine + H(+). The enzyme catalyses hydroxymethylbilane = uroporphyrinogen III + H2O. It participates in cofactor biosynthesis; adenosylcobalamin biosynthesis; precorrin-2 from uroporphyrinogen III: step 1/1. The protein operates within porphyrin-containing compound metabolism; siroheme biosynthesis; precorrin-2 from uroporphyrinogen III: step 1/1. May catalyze sequential reactions to synthesize uroporphyrinogen III from hydroxymethylbilane (HMB) and then precorrin-2, which are intermediate compounds in both vitamin B12 and siroheme biosyntheses. The chain is Porphyrin biosynthesis protein HemD (hemD) from Ruminiclostridium josui (Clostridium josui).